The chain runs to 353 residues: Nicotinate-nucleotide--dimethylbenzimidazole phosphoribosyltransferase (353 aa).

Catalysis depends on E318, which acts as the Proton acceptor.

This sequence belongs to the CobT family.

The catalysed reaction is 5,6-dimethylbenzimidazole + nicotinate beta-D-ribonucleotide = alpha-ribazole 5'-phosphate + nicotinate + H(+). It functions in the pathway nucleoside biosynthesis; alpha-ribazole biosynthesis; alpha-ribazole from 5,6-dimethylbenzimidazole: step 1/2. In terms of biological role, catalyzes the synthesis of alpha-ribazole-5'-phosphate from nicotinate mononucleotide (NAMN) and 5,6-dimethylbenzimidazole (DMB). The protein is Nicotinate-nucleotide--dimethylbenzimidazole phosphoribosyltransferase of Roseiflexus castenholzii (strain DSM 13941 / HLO8).